The sequence spans 181 residues: Ribulose bisphosphate carboxylase small subunit, chloroplastic 1 (181 aa).

Residues 1-57 (MASSIVSSAAAATRSNVAQASMVAPFTGLKSAASFPVTKKNNNVDITSLASNGGRVR) constitute a chloroplast transit peptide.

The protein belongs to the RuBisCO small chain family. In terms of assembly, (Microbial infection) Binds to tobamovirus movement protein; this interaction seems required for viral systemic movement. As to quaternary structure, heterohexadecamer of 8 large and 8 small subunits.

It localises to the plastid. It is found in the chloroplast. Its subcellular location is the cell junction. The protein localises to the plasmodesma. In terms of biological role, ruBisCO catalyzes two reactions: the carboxylation of D-ribulose 1,5-bisphosphate, the primary event in carbon dioxide fixation, as well as the oxidative fragmentation of the pentose substrate. Both reactions occur simultaneously and in competition at the same active site. Although the small subunit is not catalytic it is essential for maximal activity. Involved in antiviral defenses. In Solanum lycopersicum (Tomato), this protein is Ribulose bisphosphate carboxylase small subunit, chloroplastic 1.